Here is a 360-residue protein sequence, read N- to C-terminus: Peptide chain release factor 1 (360 aa).

At Q235 the chain carries N5-methylglutamine.

It belongs to the prokaryotic/mitochondrial release factor family. In terms of processing, methylated by PrmC. Methylation increases the termination efficiency of RF1.

It localises to the cytoplasm. Its function is as follows. Peptide chain release factor 1 directs the termination of translation in response to the peptide chain termination codons UAG and UAA. This is Peptide chain release factor 1 from Paracidovorax citrulli (strain AAC00-1) (Acidovorax citrulli).